The chain runs to 347 residues: Ferrochelatase (347 aa).

Residue C158 participates in [2Fe-2S] cluster binding. H193 and E272 together coordinate Fe cation. Residues C332, C339, and C341 each contribute to the [2Fe-2S] cluster site.

Belongs to the ferrochelatase family. As to quaternary structure, homodimer. [2Fe-2S] cluster is required as a cofactor.

The protein resides in the cytoplasm. The enzyme catalyses heme b + 2 H(+) = protoporphyrin IX + Fe(2+). Its pathway is porphyrin-containing compound metabolism; protoheme biosynthesis; protoheme from protoporphyrin-IX: step 1/1. In terms of biological role, catalyzes the ferrous insertion into protoporphyrin IX. This chain is Ferrochelatase, found in Caulobacter vibrioides (strain ATCC 19089 / CIP 103742 / CB 15) (Caulobacter crescentus).